The primary structure comprises 928 residues: MPHRAASPAMSENEFDITNALFQNDGDSDNEVPVTKSKPQRKAAPQELDFLGGNVDDDDEDDEAFIAEQQTSANRKAANLKGRTVKKGGGFQAMGLNANLLKAITRKGFSVPTPIQRKTIPVIMDDRDVVGMARTGSGKTAAFVIPMIEKLKSHSSKFGARGLILSPSRELALQTLKVVKELGKGTDLKSVLLVGGDSLEEQFGMMAGNPDIVIATPGRFLHLKVEMNLDLSSIRYVVFDEADRLFEMGFAAQLTEILHGLPTTRQTLLFSATLPKSLVEFARAGLQEPTLIRLDTESKISPDLQNAFFSVKSADKEGALLYILHEVIKMPTGPTEVAQRLQEEKANSKDSKNSKKRKRSEMDKAVNMKESPTKHSTIVFAATKHHVDYLYSLLREAGFAVSYAYGSLDQTARKIQVNNFRTGLSNILVVTDVAARGIDIPILANVINYDFPSQPKIFVHRVGRTARAGRKGWSYSLVRDADAPYLLDLQLFLGRRLVLGREHGDQVDYAEDVVVGGFPRDSLAQNCEWVTRVLDDNRDIFSQRTVATKGEKLYMRTRNAASLESAKRSKSVVGSDHWTTIHPLFSDAETEMEIQREKMLARIGGYRPQETIFEVNNRRSGKPENEEALHTIKRVRSTLDSKKKRAQAEEQSELLEDASGGNEGEANGNPDAMSDDDIPDGVPDNMSMASESDLEVTFSSYSQSKSDKAKKDSTAAFQNPEYFMSYTPSSTNLAEDRAYGVHTGTNANFTQASRSVTMDLQLDEGARGFAEPRTMKRWDKRHKKYVSRQNDEDGSKGEHLVRGESGAKIAASFRSGKFDAWKKSKRLGRLPRVGEAEDTSLSAGLNSAMGGKRFRHHKDQAPKRADPLRDDFYKKKKKNEAAKERQMSRAGGAAAGGKSEIKNTDDIRLARKLKQKRREKNARPSRKK.

The interval 1 to 46 is disordered; it reads MPHRAASPAMSENEFDITNALFQNDGDSDNEVPVTKSKPQRKAAPQ. The short motif at 89-117 is the Q motif element; the sequence is GGFQAMGLNANLLKAITRKGFSVPTPIQR. In terms of domain architecture, Helicase ATP-binding spans 120 to 292; the sequence is IPVIMDDRDV…RAGLQEPTLI (173 aa). ATP is bound at residue 133–140; the sequence is ARTGSGKT. The DEAD box signature appears at 240-243; it reads DEAD. The segment covering 342–353 has biased composition (basic and acidic residues); the sequence is QEEKANSKDSKN. Disordered regions lie at residues 342 to 368, 616 to 713, 780 to 802, and 833 to 928; these read QEEK…AVNM, NNRR…KKDS, KRHK…HLVR, and VGEA…SRKK. The Helicase C-terminal domain maps to 361–515; the sequence is EMDKAVNMKE…QVDYAEDVVV (155 aa). The span at 621–630 shows a compositional bias: basic and acidic residues; sequence GKPENEEALH. A compositionally biased stretch (low complexity) spans 657-672; that stretch reads DASGGNEGEANGNPDA. 3 stretches are compositionally biased toward basic and acidic residues: residues 789–802, 859–887, and 899–909; these read QNDE…HLVR, DQAP…ERQM, and SEIKNTDDIRL. Over residues 910–928 the composition is skewed to basic residues; sequence ARKLKQKRREKNARPSRKK.

This sequence belongs to the DEAD box helicase family. DDX54/DBP10 subfamily.

It localises to the nucleus. Its subcellular location is the nucleolus. It catalyses the reaction ATP + H2O = ADP + phosphate + H(+). In terms of biological role, ATP-binding RNA helicase involved in the biogenesis of 60S ribosomal subunits and is required for the normal formation of 25S and 5.8S rRNAs. This Aspergillus terreus (strain NIH 2624 / FGSC A1156) protein is ATP-dependent RNA helicase dbp10 (dbp10).